The chain runs to 126 residues: Small ribosomal subunit protein bS6 (126 aa).

A disordered region spans residues 103–126 (LKAKDERKAPEALVEEVEAEDADE). Residues 115-126 (LVEEVEAEDADE) show a composition bias toward acidic residues.

The protein belongs to the bacterial ribosomal protein bS6 family.

In terms of biological role, binds together with bS18 to 16S ribosomal RNA. In Glaesserella parasuis serovar 5 (strain SH0165) (Haemophilus parasuis), this protein is Small ribosomal subunit protein bS6.